The chain runs to 54 residues: Large ribosomal subunit protein bL33 (54 aa).

This sequence belongs to the bacterial ribosomal protein bL33 family.

This Frankia alni (strain DSM 45986 / CECT 9034 / ACN14a) protein is Large ribosomal subunit protein bL33.